A 375-amino-acid chain; its full sequence is Anhydro-N-acetylmuramic acid kinase (375 aa).

Residue G13–D20 coordinates ATP.

Belongs to the anhydro-N-acetylmuramic acid kinase family.

The catalysed reaction is 1,6-anhydro-N-acetyl-beta-muramate + ATP + H2O = N-acetyl-D-muramate 6-phosphate + ADP + H(+). The protein operates within amino-sugar metabolism; 1,6-anhydro-N-acetylmuramate degradation. Its pathway is cell wall biogenesis; peptidoglycan recycling. Its function is as follows. Catalyzes the specific phosphorylation of 1,6-anhydro-N-acetylmuramic acid (anhMurNAc) with the simultaneous cleavage of the 1,6-anhydro ring, generating MurNAc-6-P. Is required for the utilization of anhMurNAc either imported from the medium or derived from its own cell wall murein, and thus plays a role in cell wall recycling. The sequence is that of Anhydro-N-acetylmuramic acid kinase from Pelagibacter ubique (strain HTCC1062).